The chain runs to 150 residues: UPF0336 protein SCO4636 (150 aa).

One can recognise a MaoC-like domain in the interval 8-116; it reads VGRSYPPTAP…STIEAIKSMA (109 aa).

It belongs to the UPF0336 family.

The sequence is that of UPF0336 protein SCO4636 from Streptomyces coelicolor (strain ATCC BAA-471 / A3(2) / M145).